We begin with the raw amino-acid sequence, 205 residues long: Dephospho-CoA kinase (205 aa).

The DPCK domain maps to Ile7–Glu205. Ala15–Thr20 serves as a coordination point for ATP.

The protein belongs to the CoaE family.

It is found in the cytoplasm. It carries out the reaction 3'-dephospho-CoA + ATP = ADP + CoA + H(+). It participates in cofactor biosynthesis; coenzyme A biosynthesis; CoA from (R)-pantothenate: step 5/5. Its function is as follows. Catalyzes the phosphorylation of the 3'-hydroxyl group of dephosphocoenzyme A to form coenzyme A. The protein is Dephospho-CoA kinase of Borreliella burgdorferi (strain ATCC 35210 / DSM 4680 / CIP 102532 / B31) (Borrelia burgdorferi).